A 541-amino-acid polypeptide reads, in one-letter code: Protein VAPYRIN (541 aa).

The MSP domain maps to 4–138; the sequence is LIKLDPSNIV…IDSAIKVMFV (135 aa). ANK repeat units lie at residues 176–205, 209–238, 242–271, 275–304, 309–338, 342–372, 374–392, 396–425, 429–458, and 462–491; these read QGQT…DIEA, VGST…NTEG, SVFR…RVDS, DGNT…RTDV, EGDT…TKYV, LGKT…CAAA, KGEV…VING, NGWT…DLDA, DGYT…DVEA, and KGVS…SREG.

Interacts with EX70I at the periarbuscular membrane (PAM) around the arbuscule hyphal tips. Expressed in roots.

The protein localises to the cytoplasm. Its subcellular location is the nucleus. It localises to the cell membrane. In terms of biological role, required for arbuscular mycorrhizal (AM) symbiosis with AM fungi (e.g. Glomus versiforme and Gigaspora gigantea) both during fungal passage across root epidermis and for arbuscule formation in cortical cells; this symbiosis promotes phosphorus (P) and copper (Cu) uptake. Essential for infection by symbiotic nitrogen-fixing rhizobial bacteria (e.g. Sinorhizobium meliloti) leading to the formation of root nodules. The sequence is that of Protein VAPYRIN from Medicago truncatula (Barrel medic).